The following is a 153-amino-acid chain: Nucleoside diphosphate kinase (153 aa).

Lysine 11, phenylalanine 59, arginine 87, threonine 93, arginine 104, and asparagine 114 together coordinate ATP. The active-site Pros-phosphohistidine intermediate is the histidine 117.

This sequence belongs to the NDK family. Requires Mg(2+) as cofactor.

The catalysed reaction is a 2'-deoxyribonucleoside 5'-diphosphate + ATP = a 2'-deoxyribonucleoside 5'-triphosphate + ADP. It carries out the reaction a ribonucleoside 5'-diphosphate + ATP = a ribonucleoside 5'-triphosphate + ADP. Major role in the synthesis of nucleoside triphosphates other than ATP. The ATP gamma phosphate is transferred to the NDP beta phosphate via a ping-pong mechanism, using a phosphorylated active-site intermediate. This chain is Nucleoside diphosphate kinase (swoH), found in Emericella nidulans (strain FGSC A4 / ATCC 38163 / CBS 112.46 / NRRL 194 / M139) (Aspergillus nidulans).